A 418-amino-acid polypeptide reads, in one-letter code: Tryptophan synthase beta chain (418 aa).

The segment covering 1-18 (MTSTLPKASQPDPSSLQP) has biased composition (polar residues). The tract at residues 1-28 (MTSTLPKASQPDPSSLQPSARPGAHGRF) is disordered. Residue Lys111 is modified to N6-(pyridoxal phosphate)lysine.

It belongs to the TrpB family. In terms of assembly, tetramer of two alpha and two beta chains. Requires pyridoxal 5'-phosphate as cofactor.

The catalysed reaction is (1S,2R)-1-C-(indol-3-yl)glycerol 3-phosphate + L-serine = D-glyceraldehyde 3-phosphate + L-tryptophan + H2O. Its pathway is amino-acid biosynthesis; L-tryptophan biosynthesis; L-tryptophan from chorismate: step 5/5. In terms of biological role, the beta subunit is responsible for the synthesis of L-tryptophan from indole and L-serine. In Synechococcus sp. (strain CC9902), this protein is Tryptophan synthase beta chain.